We begin with the raw amino-acid sequence, 608 residues long: Actin-interacting protein 1 (608 aa).

11 WD repeats span residues 62 to 101 (EHSC…HLLK), 106 to 149 (PIAG…GEIS), 150 to 190 (GQSK…FKMT), 193 to 232 (DHSR…LVGE), 237 to 276 (AHKG…LVSE), 323 to 362 (GHNK…NDRI), 366 to 403 (GHGN…YTDY), 444 to 483 (PIKY…LEPK), 487 to 526 (DHLG…PAHN), 531 to 570 (FHSA…KHTI), and 575 to 607 (HPQS…HVEN).

It belongs to the WD repeat AIP1 family. As to expression, expressed in pupal wing cells.

The protein localises to the cytoplasm. The protein resides in the cytoskeleton. Its function is as follows. Induces disassembly of actin filaments in conjunction with ADF/cofilin family proteins. Together with GMF, promotes Arp2/3-nucleated actin filament array disassembly. Essential for organismal and cell viability. Required for the development of normal wing cell planar polarity. In egg chambers and together with GMF, plays an important role in directional migration of border cell clusters. The polypeptide is Actin-interacting protein 1 (flr) (Drosophila melanogaster (Fruit fly)).